A 340-amino-acid chain; its full sequence is Nuclear hormone receptor family member nhr-268 (340 aa).

The segment at residues 1–75 (MNCLVCSARA…IGMKAASKND (75 aa)) is a DNA-binding region (nuclear receptor). NR C4-type zinc fingers lie at residues 3 to 23 (CLVC…CFAC) and 39 to 58 (CKYF…CRAC). Residues 98–337 (KNDKNYSNFI…KRLMQDIFSH (240 aa)) form the NR LBD domain.

The protein belongs to the nuclear hormone receptor family.

The protein localises to the nucleus. In terms of biological role, orphan nuclear receptor. The polypeptide is Nuclear hormone receptor family member nhr-268 (nhr-268) (Caenorhabditis elegans).